Consider the following 101-residue polypeptide: uncharacterized protein (101 aa).

This is an uncharacterized protein from Escherichia coli O157:H7.